Reading from the N-terminus, the 844-residue chain is Saxiphilin (844 aa).

The N-terminal stretch at 1–19 is a signal peptide; sequence MAPTFQTALFFTIISLSFA. Residues 26–106 form the Transferrin-like 1; first part domain; the sequence is VRWCAISDLE…IAEPYSSNRD (81 aa). 19 disulfide bridges follow: Cys-29-Cys-64, Cys-39-Cys-55, Cys-110-Cys-130, Cys-141-Cys-148, Cys-150-Cys-172, Cys-180-Cys-202, Cys-222-Cys-244, Cys-277-Cys-360, Cys-322-Cys-335, Cys-332-Cys-343, Cys-388-Cys-402, Cys-495-Cys-527, Cys-505-Cys-518, Cys-552-Cys-839, Cys-570-Cys-799, Cys-607-Cys-685, Cys-641-Cys-655, Cys-652-Cys-668, and Cys-725-Cys-739. Thyroglobulin type-1 domains are found at residues 107–172 and 177–244; these read LQKC…RATC and LPKC…PATC. An absent in transferrins region spans residues 109 to 249; the sequence is KCLKERQQAL…IPATCQKHDL (141 aa). The 238-residue stretch at 245 to 482 folds into the Transferrin-like 1; second part domain; that stretch reads QKHDLVTTCH…LFHAMKALTG (238 aa). The region spanning 492–828 is the Transferrin-like 2 domain; it reads VRWCTINKLE…YYTTVYGASR (337 aa).

Belongs to the transferrin family. In terms of assembly, monomer. In terms of tissue distribution, plasma. Highest levels of transcripts found in the liver, the lung, the pancreas and the brain.

It localises to the secreted. Its function is as follows. Binds specifically to the neurotoxin saxitoxin. Its physiological role may be to transport or sequester an endogenous organic molecule other than Fe(3+). It may participate in a detoxification mechanism for neutralizing a microbial toxin. This chain is Saxiphilin, found in Aquarana catesbeiana (American bullfrog).